Reading from the N-terminus, the 194-residue chain is FMN-dependent NADH:quinone oxidoreductase (194 aa).

FMN contacts are provided by residues S10 and 90–93 (MYNL).

Belongs to the azoreductase type 1 family. Homodimer. The cofactor is FMN.

It carries out the reaction 2 a quinone + NADH + H(+) = 2 a 1,4-benzosemiquinone + NAD(+). It catalyses the reaction N,N-dimethyl-1,4-phenylenediamine + anthranilate + 2 NAD(+) = 2-(4-dimethylaminophenyl)diazenylbenzoate + 2 NADH + 2 H(+). Quinone reductase that provides resistance to thiol-specific stress caused by electrophilic quinones. Functionally, also exhibits azoreductase activity. Catalyzes the reductive cleavage of the azo bond in aromatic azo compounds to the corresponding amines. The chain is FMN-dependent NADH:quinone oxidoreductase from Haemophilus influenzae (strain ATCC 51907 / DSM 11121 / KW20 / Rd).